Here is a 754-residue protein sequence, read N- to C-terminus: Endothelin-converting enzyme 1 (754 aa).

The Cytoplasmic portion of the chain corresponds to 1-52; the sequence is MMSTYKRATLDEEDLVDSLSEGEVYPNGLQVNFRNFRSSQRCWATRTQVEKR. Position 9 is a phosphothreonine (Thr9). The chain crosses the membrane as a helical; Signal-anchor for type II membrane protein span at residues 53–73; it reads LIVLVALLAAGLVACLTALGI. The Extracellular portion of the chain corresponds to 74–754; that stretch reads QYRTRTPPVC…MNPRHKCEVW (681 aa). The region spanning 82 to 754 is the Peptidase M13 domain; that stretch reads VCLSEACVSV…MNPRHKCEVW (673 aa). Intrachain disulfides connect Cys83-Cys88, Cys106-Cys739, Cys114-Cys699, Cys169-Cys419, and Cys628-Cys751. N-linked (GlcNAc...) asparagine glycosylation is found at Asn150, Asn171, Asn194, Asn254, Asn300, Asn346, Asn367, and Asn523. A Zn(2+)-binding site is contributed by His591. Residue Glu592 is part of the active site. His595 is a Zn(2+) binding site. Asn616 and Asn635 each carry an N-linked (GlcNAc...) asparagine glycan. Residue Glu651 participates in Zn(2+) binding. The active-site Proton donor is the Asp655.

This sequence belongs to the peptidase M13 family. Homodimer; disulfide-linked. Interacts with PPP1R16B. Interacts with TSPAN8; this interaction recruits the endothelin converting enzyme ECE1 to tetraspanin-enriched microdomains and positively modulates its enzymatic activity. Requires Zn(2+) as cofactor.

The protein resides in the cell membrane. The catalysed reaction is Hydrolysis of the 21-Trp-|-Val-22 bond in big endothelin to form endothelin 1.. Inhibited by phosphoramidon. In terms of biological role, converts big endothelin-1 to endothelin-1. This is Endothelin-converting enzyme 1 (ECE1) from Cavia porcellus (Guinea pig).